The following is a 438-amino-acid chain: Glutamine synthetase (438 aa).

The GS beta-grasp domain maps to 14-98; sequence EEVEYVDIRF…VHCNVVEPDT (85 aa). Positions 106-438 constitute a GS catalytic domain; the sequence is PRIALKAEAY…LAGDVFTKDQ (333 aa). Glu-130 and Glu-132 together coordinate Mg(2+). Asp-208 is an ATP binding site. Mg(2+)-binding residues include Glu-213 and Glu-220. L-glutamate is bound by residues 264–265 and Gly-265; that span reads NG. His-269 is a binding site for Mg(2+). Residues 271–273 and Ser-273 contribute to the ATP site; that span reads NMS. Residues Arg-321, Glu-327, and Arg-339 each coordinate L-glutamate. Positions 339, 344, and 352 each coordinate ATP. Glu-357 contacts Mg(2+). Arg-359 provides a ligand contact to L-glutamate. Position 397 is an O-AMP-tyrosine (Tyr-397).

Belongs to the glutamine synthetase family. Oligomer of 12 subunits arranged in the form of two hexameric ring. Requires Mg(2+) as cofactor.

The protein localises to the cytoplasm. It carries out the reaction L-glutamate + NH4(+) + ATP = L-glutamine + ADP + phosphate + H(+). The activity of this enzyme could be controlled by adenylation under conditions of abundant glutamine. Functionally, catalyzes the ATP-dependent biosynthesis of glutamine from glutamate and ammonia. This Rhodobacter capsulatus (Rhodopseudomonas capsulata) protein is Glutamine synthetase.